We begin with the raw amino-acid sequence, 90 residues long: DNA-binding protein HU-alpha (90 aa).

The protein belongs to the bacterial histone-like protein family. As to quaternary structure, heterodimer of an alpha and a beta chain.

Functionally, histone-like DNA-binding protein which is capable of wrapping DNA to stabilize it, and thus to prevent its denaturation under extreme environmental conditions. In Serratia marcescens, this protein is DNA-binding protein HU-alpha (hupA).